Consider the following 321-residue polypeptide: Serpentine receptor class delta-63 (321 aa).

Transmembrane regions (helical) follow at residues 14-34, 41-61, 83-103, 128-148, 190-208, 240-260, and 273-293; these read LVYM…YNFT, VKYF…MAFA, YIGP…GIVV, LWTL…IVII, AAMS…GTYW, NFQI…YFMI, and TITV…IYFI.

Belongs to the nematode receptor-like protein srd family.

The protein localises to the membrane. The protein is Serpentine receptor class delta-63 (srd-63) of Caenorhabditis elegans.